The following is a 313-amino-acid chain: MRTLYPEVTPFDHGMLCVDDSHRLYYEQCGNPHGKPVVILHGGPGGGCNDKMRRFHDPDKYRIVLFDQRGAGRSMPHANLTNNTTWDLVADIEKLRVALGITRWQVFGGSWGSTLALAYAQTHPEQTTELVLRGIFMLRRWELEWFYQEGASRLFPDAWDRYIAAIPPVERHDLISAFHRRLTSDDEATRLAAAQAWSLWEGATSCLYMDQDFIASHENPHFALAFARIENHYFVNGGFFEVEDQLLRDAQRIANIPGVIVHGRYDVVCPLQNAWDLHKAWPKASLKITPGAGHSAFEPQNIDALVCATDSFV.

An AB hydrolase-1 domain is found at 35–298; it reads KPVVILHGGP…TPGAGHSAFE (264 aa). Serine 110 (nucleophile) is an active-site residue. Aspartate 266 is a catalytic residue. Histidine 294 serves as the catalytic Proton donor.

This sequence belongs to the peptidase S33 family.

It is found in the cytoplasm. It catalyses the reaction Release of N-terminal proline from a peptide.. Functionally, specifically catalyzes the removal of N-terminal proline residues from peptides. In Xylella fastidiosa (strain Temecula1 / ATCC 700964), this protein is Proline iminopeptidase (pip).